The sequence spans 156 residues: uncharacterized protein (156 aa).

Positions 11 to 156 constitute an N-acetyltransferase domain; the sequence is EEFRSYLTYT…ETDVVMSKKL (146 aa).

Belongs to the acetyltransferase family. Homodimer.

This is an uncharacterized protein from Bacillus subtilis (strain 168).